The following is a 482-amino-acid chain: Aspartyl/glutamyl-tRNA(Asn/Gln) amidotransferase subunit B (482 aa).

It belongs to the GatB/GatE family. GatB subfamily. As to quaternary structure, heterotrimer of A, B and C subunits.

The catalysed reaction is L-glutamyl-tRNA(Gln) + L-glutamine + ATP + H2O = L-glutaminyl-tRNA(Gln) + L-glutamate + ADP + phosphate + H(+). It catalyses the reaction L-aspartyl-tRNA(Asn) + L-glutamine + ATP + H2O = L-asparaginyl-tRNA(Asn) + L-glutamate + ADP + phosphate + 2 H(+). Its function is as follows. Allows the formation of correctly charged Asn-tRNA(Asn) or Gln-tRNA(Gln) through the transamidation of misacylated Asp-tRNA(Asn) or Glu-tRNA(Gln) in organisms which lack either or both of asparaginyl-tRNA or glutaminyl-tRNA synthetases. The reaction takes place in the presence of glutamine and ATP through an activated phospho-Asp-tRNA(Asn) or phospho-Glu-tRNA(Gln). In Thermotoga petrophila (strain ATCC BAA-488 / DSM 13995 / JCM 10881 / RKU-1), this protein is Aspartyl/glutamyl-tRNA(Asn/Gln) amidotransferase subunit B.